A 129-amino-acid polypeptide reads, in one-letter code: MARVKRSVNAHKKRRSVLKASKGYRGQRSRLYRKAKEQQLHSLNYAYRDRRARKGEFRKLWISRINAAARANDITYNRLIQGLKAAGVEVDRKNLADIAITDPAAFTALVDVARAALPEDVSAPSGEAA.

The segment covering 1 to 17 (MARVKRSVNAHKKRRSV) has biased composition (basic residues). The segment at 1-29 (MARVKRSVNAHKKRRSVLKASKGYRGQRS) is disordered.

It belongs to the bacterial ribosomal protein bL20 family.

Binds directly to 23S ribosomal RNA and is necessary for the in vitro assembly process of the 50S ribosomal subunit. It is not involved in the protein synthesizing functions of that subunit. The sequence is that of Large ribosomal subunit protein bL20 from Mycobacterium ulcerans (strain Agy99).